The following is a 317-amino-acid chain: Melanocyte-stimulating hormone receptor (317 aa).

Topologically, residues Met-1–Glu-37 are extracellular. Asn-29 is a glycosylation site (N-linked (GlcNAc...) asparagine). Residues Val-38–Ile-63 traverse the membrane as a helical segment. Residues Ala-64–Pro-72 lie on the Cytoplasmic side of the membrane. Residues Met-73–Leu-93 form a helical membrane-spanning segment. The Extracellular segment spans residues Glu-94–Asn-118. The chain crosses the membrane as a helical span at residues Val-119–Val-140. Over Asp-141–Arg-163 the chain is Cytoplasmic. A helical transmembrane segment spans residues Val-164–Cys-183. Residues Asp-184 to Ser-191 are Extracellular-facing. A helical transmembrane segment spans residues Leu-192–Leu-211. Over Ala-212–Ala-240 the chain is Cytoplasmic. Residues Ala-241–Leu-266 form a helical membrane-spanning segment. Over Cys-267 to Asn-279 the chain is Extracellular. Residues Phe-280 to Phe-300 form a helical membrane-spanning segment. Residues Arg-301–Trp-317 lie on the Cytoplasmic side of the membrane. A lipid anchor (S-palmitoyl cysteine) is attached at Cys-315.

Belongs to the G-protein coupled receptor 1 family. Interacts with MGRN1, but does not undergo MGRN1-mediated ubiquitination; this interaction competes with GNAS-binding and thus inhibits agonist-induced cAMP production. Interacts with OPN3; the interaction results in a decrease in MC1R-mediated cAMP signaling and ultimately a decrease in melanin production in melanocytes.

It localises to the cell membrane. Functionally, receptor for MSH (alpha, beta and gamma) and ACTH. The activity of this receptor is mediated by G proteins which activate adenylate cyclase. Mediates melanogenesis, the production of eumelanin (black/brown) and phaeomelanin (red/yellow), via regulation of cAMP signaling in melanocytes. The polypeptide is Melanocyte-stimulating hormone receptor (MC1R) (Trachypithecus auratus (Javan langur)).